Here is a 196-residue protein sequence, read N- to C-terminus: Orotate phosphoribosyltransferase (196 aa).

117-125 (EDIVTTGLS) provides a ligand contact to 5-phospho-alpha-D-ribose 1-diphosphate. T121 and R149 together coordinate orotate.

Belongs to the purine/pyrimidine phosphoribosyltransferase family. PyrE subfamily. As to quaternary structure, homodimer. Mg(2+) is required as a cofactor.

The catalysed reaction is orotidine 5'-phosphate + diphosphate = orotate + 5-phospho-alpha-D-ribose 1-diphosphate. The protein operates within pyrimidine metabolism; UMP biosynthesis via de novo pathway; UMP from orotate: step 1/2. Catalyzes the transfer of a ribosyl phosphate group from 5-phosphoribose 1-diphosphate to orotate, leading to the formation of orotidine monophosphate (OMP). This chain is Orotate phosphoribosyltransferase, found in Methylobacterium sp. (strain 4-46).